A 172-amino-acid chain; its full sequence is uncharacterized protein (172 aa).

Residues 12-172 form the N-acetyltransferase domain; sequence IRLRCMEDRD…IAVYERKSYN (161 aa).

This is an uncharacterized protein from Bacillus subtilis (strain 168).